The primary structure comprises 180 residues: Shikimate kinase (180 aa).

15-20 (GAGKTT) contacts ATP. Mg(2+) is bound at residue Thr-19. Positions 37, 61, and 83 each coordinate substrate. Residue Arg-121 participates in ATP binding. Arg-140 is a binding site for substrate.

It belongs to the shikimate kinase family. As to quaternary structure, monomer. Mg(2+) serves as cofactor.

It localises to the cytoplasm. The catalysed reaction is shikimate + ATP = 3-phosphoshikimate + ADP + H(+). It functions in the pathway metabolic intermediate biosynthesis; chorismate biosynthesis; chorismate from D-erythrose 4-phosphate and phosphoenolpyruvate: step 5/7. Its function is as follows. Catalyzes the specific phosphorylation of the 3-hydroxyl group of shikimic acid using ATP as a cosubstrate. The sequence is that of Shikimate kinase from Psychrobacter sp. (strain PRwf-1).